The following is a 130-amino-acid chain: Small ribosomal subunit protein uS8 (130 aa).

The protein belongs to the universal ribosomal protein uS8 family. In terms of assembly, part of the 30S ribosomal subunit.

One of the primary rRNA binding proteins, it binds directly to 16S rRNA central domain where it helps coordinate assembly of the platform of the 30S subunit. This is Small ribosomal subunit protein uS8 from Methanosarcina mazei (strain ATCC BAA-159 / DSM 3647 / Goe1 / Go1 / JCM 11833 / OCM 88) (Methanosarcina frisia).